The primary structure comprises 144 residues: Prefoldin subunit alpha (144 aa).

This sequence belongs to the prefoldin subunit alpha family. As to quaternary structure, heterohexamer of two alpha and four beta subunits.

It localises to the cytoplasm. Molecular chaperone capable of stabilizing a range of proteins. Seems to fulfill an ATP-independent, HSP70-like function in archaeal de novo protein folding. This Methanosarcina barkeri (strain Fusaro / DSM 804) protein is Prefoldin subunit alpha.